The chain runs to 421 residues: U-box domain-containing protein 26 (421 aa).

Residues 13 to 87 (QIPYHFRCPI…QEWCVANRSN (75 aa)) enclose the U-box domain.

The enzyme catalyses S-ubiquitinyl-[E2 ubiquitin-conjugating enzyme]-L-cysteine + [acceptor protein]-L-lysine = [E2 ubiquitin-conjugating enzyme]-L-cysteine + N(6)-ubiquitinyl-[acceptor protein]-L-lysine.. The protein operates within protein modification; protein ubiquitination. In terms of biological role, functions as an E3 ubiquitin ligase. The sequence is that of U-box domain-containing protein 26 (PUB26) from Arabidopsis thaliana (Mouse-ear cress).